A 65-amino-acid chain; its full sequence is Small ribosomal subunit protein bS21A (65 aa).

It belongs to the bacterial ribosomal protein bS21 family.

In Francisella tularensis subsp. holarctica (strain LVS), this protein is Small ribosomal subunit protein bS21A.